Here is a 435-residue protein sequence, read N- to C-terminus: 3-phosphoshikimate 1-carboxyvinyltransferase (435 aa).

Residues Lys-23, Ser-24, and Arg-28 each contribute to the 3-phosphoshikimate site. Lys-23 provides a ligand contact to phosphoenolpyruvate. Positions 97 and 125 each coordinate phosphoenolpyruvate. Positions 170, 171, 172, 198, 315, 338, and 342 each coordinate 3-phosphoshikimate. Gln-172 contributes to the phosphoenolpyruvate binding site. The Proton acceptor role is filled by Asp-315. Phosphoenolpyruvate-binding residues include Arg-346, Arg-388, and Lys-413.

Belongs to the EPSP synthase family. In terms of assembly, monomer.

The protein resides in the cytoplasm. It catalyses the reaction 3-phosphoshikimate + phosphoenolpyruvate = 5-O-(1-carboxyvinyl)-3-phosphoshikimate + phosphate. The protein operates within metabolic intermediate biosynthesis; chorismate biosynthesis; chorismate from D-erythrose 4-phosphate and phosphoenolpyruvate: step 6/7. In terms of biological role, catalyzes the transfer of the enolpyruvyl moiety of phosphoenolpyruvate (PEP) to the 5-hydroxyl of shikimate-3-phosphate (S3P) to produce enolpyruvyl shikimate-3-phosphate and inorganic phosphate. In Buchnera aphidicola subsp. Cinara cedri (strain Cc), this protein is 3-phosphoshikimate 1-carboxyvinyltransferase.